The sequence spans 634 residues: Chaperone protein HtpG (634 aa).

Positions 1–342 are a; substrate-binding; the sequence is MSVETQKETL…SNDLSLNVSR (342 aa). A b region spans residues 343-559; sequence EILQKDPVID…EQDLGLQMRQ (217 aa). The segment at 560–634 is c; the sequence is ILEASGQKVP…LNKLLVELSA (75 aa).

The protein belongs to the heat shock protein 90 family. Homodimer.

The protein resides in the cytoplasm. Its function is as follows. Molecular chaperone. Has ATPase activity. The protein is Chaperone protein HtpG of Pseudomonas aeruginosa (strain ATCC 15692 / DSM 22644 / CIP 104116 / JCM 14847 / LMG 12228 / 1C / PRS 101 / PAO1).